We begin with the raw amino-acid sequence, 509 residues long: Probable Xaa-Pro aminopeptidase MAC_04092 (509 aa).

4 residues coordinate Mn(2+): Asp273, Asp284, Glu437, and Glu478.

Belongs to the peptidase M24B family. It depends on Mn(2+) as a cofactor.

It catalyses the reaction Release of any N-terminal amino acid, including proline, that is linked to proline, even from a dipeptide or tripeptide.. Catalyzes the removal of a penultimate prolyl residue from the N-termini of peptides. The chain is Probable Xaa-Pro aminopeptidase MAC_04092 from Metarhizium acridum (strain CQMa 102).